Here is a 131-residue protein sequence, read N- to C-terminus: Probable flagellum biosynthesis repressor protein FlbT (131 aa).

The protein belongs to the FlbT family.

Functionally, has a post-transcriptional repressor function in flagellum biogenesis. Associates with the 5'-UTR of fljK mRNA and promotes its degradation. This chain is Probable flagellum biosynthesis repressor protein FlbT, found in Caulobacter sp. (strain K31).